Here is a 389-residue protein sequence, read N- to C-terminus: Na(+)/H(+) antiporter NhaA (389 aa).

Transmembrane regions (helical) follow at residues 17–37 (ILLL…LAGF), 59–79 (LLLW…GLEV), 95–115 (SLPT…YLLF), 124–144 (AGWA…MALL), 154–174 (VFLL…IALF), 177–197 (SDLS…LVAL), 213–233 (LILW…GVII), 261–281 (FLIL…NMSL), 292–312 (IALG…FVAV), 328–348 (IAPV…IASL), and 363–383 (LGTL…LSKV).

Belongs to the NhaA Na(+)/H(+) (TC 2.A.33) antiporter family.

It localises to the cell inner membrane. The enzyme catalyses Na(+)(in) + 2 H(+)(out) = Na(+)(out) + 2 H(+)(in). Functionally, na(+)/H(+) antiporter that extrudes sodium in exchange for external protons. The polypeptide is Na(+)/H(+) antiporter NhaA (Shewanella oneidensis (strain ATCC 700550 / JCM 31522 / CIP 106686 / LMG 19005 / NCIMB 14063 / MR-1)).